The chain runs to 215 residues: 3,4-dihydroxy-2-butanone 4-phosphate synthase (215 aa).

D-ribulose 5-phosphate is bound by residues 37–38 (RE), Asp-42, 150–154 (RRGHT), and Glu-175. Mg(2+) is bound at residue Glu-38. His-153 contributes to the Mg(2+) binding site.

Belongs to the DHBP synthase family. Homodimer. Mg(2+) is required as a cofactor. It depends on Mn(2+) as a cofactor.

It carries out the reaction D-ribulose 5-phosphate = (2S)-2-hydroxy-3-oxobutyl phosphate + formate + H(+). It participates in cofactor biosynthesis; riboflavin biosynthesis; 2-hydroxy-3-oxobutyl phosphate from D-ribulose 5-phosphate: step 1/1. In terms of biological role, catalyzes the conversion of D-ribulose 5-phosphate to formate and 3,4-dihydroxy-2-butanone 4-phosphate. This chain is 3,4-dihydroxy-2-butanone 4-phosphate synthase, found in Desulfatibacillum aliphaticivorans.